A 637-amino-acid polypeptide reads, in one-letter code: Chaperone protein HtpG (637 aa).

The interval 1–345 (MSQQETHGFQ…SNDLPLNVSR (345 aa)) is a; substrate-binding. Positions 346–562 (EILQDNHITK…EGEMSSQMIK (217 aa)) are b. A c region spans residues 563 to 637 (LMQAAGQPVP…MNQMLLANLK (75 aa)).

It belongs to the heat shock protein 90 family. As to quaternary structure, homodimer.

It is found in the cytoplasm. Molecular chaperone. Has ATPase activity. This chain is Chaperone protein HtpG, found in Shewanella sp. (strain MR-4).